The chain runs to 484 residues: Monocarboxylate transporter 2 (484 aa).

Topologically, residues Met-1–Asp-16 are cytoplasmic. A helical membrane pass occupies residues Gly-17–Phe-37. At Pro-38–Ala-60 the chain is on the extracellular side. The chain crosses the membrane as a helical span at residues Trp-61–Val-81. Over Asn-82–Arg-87 the chain is Cytoplasmic. A helical transmembrane segment spans residues Pro-88 to Asn-108. Over Ser-109–Thr-116 the chain is Extracellular. A helical transmembrane segment spans residues Ile-117 to Gly-137. At Lys-138–Arg-144 the chain is on the cytoplasmic side. The helical transmembrane segment at Pro-145–Phe-165 threads the bilayer. Over Asn-166–Gly-174 the chain is Extracellular. The helical transmembrane segment at Trp-175–Leu-195 threads the bilayer. Over Met-196 to Gly-245 the chain is Cytoplasmic. A disordered region spans residues Thr-201 to Ser-224. Residues Phe-246–Phe-266 form a helical membrane-spanning segment. At Leu-267–Ala-282 the chain is on the extracellular side. The chain crosses the membrane as a helical span at residues Leu-283 to Ala-303. Topologically, residues Asn-304–Arg-311 are cytoplasmic. A helical transmembrane segment spans residues Ile-312–Leu-332. At Ala-333–Pro-337 the chain is on the extracellular side. Residues Ala-338–Phe-358 form a helical membrane-spanning segment. The Cytoplasmic portion of the chain corresponds to Glu-359 to Ser-372. Residues Ala-373 to Gly-393 traverse the membrane as a helical segment. The Extracellular portion of the chain corresponds to Lys-394–Met-405. The chain crosses the membrane as a helical span at residues Tyr-406–Ile-426. Residues Asn-427–Ile-484 are Cytoplasmic-facing. Residues Arg-437–Ile-484 are disordered. Composition is skewed to basic and acidic residues over residues Pro-449 to Ser-465 and Pro-475 to Ile-484.

The protein belongs to the major facilitator superfamily. Monocarboxylate porter (TC 2.A.1.13) family. Homodimer. Interacts with GRID2IP. Interacts with EMB; interaction mediates SLC16A7 targeting to the plasma membrane. Interacts with isoform 2 of BSG. As to expression, abundant on the surface of hepatocytes. Present on parietal cells of the oxyntic gland of the stomach, on the basolateral surface of epithelial cells in the collecting ducts of the kidney, on sperm tails throughout the epididymis. Expressed in mitochondria-rich skeletal muscle fibers and cardiac myocytes (at protein level).

The protein resides in the cell membrane. The protein localises to the basolateral cell membrane. It is found in the cytoplasm. It catalyses the reaction pyruvate(out) + H(+)(out) = pyruvate(in) + H(+)(in). The enzyme catalyses 3-methyl-2-oxobutanoate(out) + H(+)(out) = 3-methyl-2-oxobutanoate(in) + H(+)(in). The catalysed reaction is (S)-lactate(in) + H(+)(in) = (S)-lactate(out) + H(+)(out). It carries out the reaction acetoacetate(out) + H(+)(out) = acetoacetate(in) + H(+)(in). It catalyses the reaction (R)-3-hydroxybutanoate(out) + H(+)(out) = (R)-3-hydroxybutanoate(in) + H(+)(in). The enzyme catalyses 4-methyl-2-oxopentanoate(out) + H(+)(out) = 4-methyl-2-oxopentanoate(in) + H(+)(in). The catalysed reaction is (S)-3-hydroxybutanoate(out) + H(+)(out) = (S)-3-hydroxybutanoate(in) + H(+)(in). Its activity is regulated as follows. Transport activity exhibits steep dependence on substrate concentration. Substrate concentration sensitivity of SLC16A7 arises from the strong inter-subunit cooperativity of the SLC16A7 dimer during transport. Inhibited by AR-C155858. In terms of biological role, proton-coupled monocarboxylate symporter. Catalyzes the rapid transport across the plasma membrane of monocarboxylates such as L-lactate, pyruvate and ketone bodies, acetoacetate, beta-hydroxybutyrate and acetate. Dimerization is functionally required and both subunits work cooperatively in transporting substrate. The protein is Monocarboxylate transporter 2 (SLC16A7) of Mesocricetus auratus (Golden hamster).